The following is a 106-amino-acid chain: Putative membrane protein insertion efficiency factor (106 aa).

The protein belongs to the UPF0161 family.

It localises to the cell inner membrane. Could be involved in insertion of integral membrane proteins into the membrane. The sequence is that of Putative membrane protein insertion efficiency factor from Methylacidiphilum infernorum (isolate V4) (Methylokorus infernorum (strain V4)).